The primary structure comprises 151 residues: Small ribosomal subunit protein uS15 (151 aa).

It belongs to the universal ribosomal protein uS15 family.

This chain is Small ribosomal subunit protein uS15 (RpS13), found in Anopheles gambiae (African malaria mosquito).